The following is a 366-amino-acid chain: NADH-quinone oxidoreductase subunit D (366 aa).

The protein belongs to the complex I 49 kDa subunit family. As to quaternary structure, NDH-1 is composed of 14 different subunits. Subunits NuoB, C, D, E, F, and G constitute the peripheral sector of the complex.

It is found in the cell membrane. It catalyses the reaction a quinone + NADH + 5 H(+)(in) = a quinol + NAD(+) + 4 H(+)(out). Its function is as follows. NDH-1 shuttles electrons from NADH, via FMN and iron-sulfur (Fe-S) centers, to quinones in the respiratory chain. The immediate electron acceptor for the enzyme in this species is believed to be a menaquinone. Couples the redox reaction to proton translocation (for every two electrons transferred, four hydrogen ions are translocated across the cytoplasmic membrane), and thus conserves the redox energy in a proton gradient. This chain is NADH-quinone oxidoreductase subunit D, found in Bacillus mycoides (strain KBAB4) (Bacillus weihenstephanensis).